A 259-amino-acid polypeptide reads, in one-letter code: Dihydroorotate dehydrogenase B (NAD(+)), electron transfer subunit (259 aa).

The FAD-binding FR-type domain occupies 2-102; the sequence is MQKQNMIVVN…LGPLGHGFPV (101 aa). FAD contacts are provided by residues 53–56, 70–72, and 77–78; these read RPIS, LYR, and GT. Cys221, Cys226, Cys229, and Cys246 together coordinate [2Fe-2S] cluster.

Belongs to the PyrK family. Heterotetramer of 2 PyrK and 2 PyrD type B subunits. [2Fe-2S] cluster serves as cofactor. Requires FAD as cofactor.

It participates in pyrimidine metabolism; UMP biosynthesis via de novo pathway; orotate from (S)-dihydroorotate (NAD(+) route): step 1/1. Functionally, responsible for channeling the electrons from the oxidation of dihydroorotate from the FMN redox center in the PyrD type B subunit to the ultimate electron acceptor NAD(+). The polypeptide is Dihydroorotate dehydrogenase B (NAD(+)), electron transfer subunit (Bacillus mycoides (strain KBAB4) (Bacillus weihenstephanensis)).